The primary structure comprises 539 residues: CTP synthase (539 aa).

The segment at methionine 1–leucine 267 is amidoligase domain. Residue serine 15 participates in CTP binding. Serine 15 is a UTP binding site. ATP is bound by residues serine 16–leucine 21 and aspartate 73. Mg(2+)-binding residues include aspartate 73 and glutamate 141. CTP-binding positions include aspartate 148–glutamate 150, lysine 188–glutamine 193, and lysine 224. UTP-binding positions include lysine 188–glutamine 193 and lysine 224. Positions threonine 292–lysine 536 constitute a Glutamine amidotransferase type-1 domain. Glycine 359 serves as a coordination point for L-glutamine. The Nucleophile; for glutamine hydrolysis role is filled by cysteine 386. L-glutamine contacts are provided by residues leucine 387–glutamine 390, glutamate 410, and arginine 464. Residues histidine 509 and glutamate 511 contribute to the active site.

The protein belongs to the CTP synthase family. In terms of assembly, homotetramer.

It carries out the reaction UTP + L-glutamine + ATP + H2O = CTP + L-glutamate + ADP + phosphate + 2 H(+). The enzyme catalyses L-glutamine + H2O = L-glutamate + NH4(+). The catalysed reaction is UTP + NH4(+) + ATP = CTP + ADP + phosphate + 2 H(+). The protein operates within pyrimidine metabolism; CTP biosynthesis via de novo pathway; CTP from UDP: step 2/2. With respect to regulation, allosterically activated by GTP, when glutamine is the substrate; GTP has no effect on the reaction when ammonia is the substrate. The allosteric effector GTP functions by stabilizing the protein conformation that binds the tetrahedral intermediate(s) formed during glutamine hydrolysis. Inhibited by the product CTP, via allosteric rather than competitive inhibition. Functionally, catalyzes the ATP-dependent amination of UTP to CTP with either L-glutamine or ammonia as the source of nitrogen. Regulates intracellular CTP levels through interactions with the four ribonucleotide triphosphates. This is CTP synthase from Wolbachia sp. subsp. Brugia malayi (strain TRS).